The sequence spans 205 residues: Lymphotoxin-alpha (205 aa).

Residues Met1–Gly34 form the signal peptide. Thr41 is a glycosylation site (O-linked (GalNAc...) threonine). Positions Pro63–Leu205 constitute a THD domain. The N-linked (GlcNAc...) asparagine glycan is linked to Asn96.

Belongs to the tumor necrosis factor family. In terms of assembly, homotrimer, and heterotrimer of either two LTB and one LTA subunits or (less prevalent) two LTA and one LTB subunits. Interacts with TNFRSF14.

It localises to the secreted. The protein localises to the membrane. Its function is as follows. Cytokine that in its homotrimeric form binds to TNFRSF1A/TNFR1, TNFRSF1B/TNFBR and TNFRSF14/HVEM. In its heterotrimeric form with LTB binds to TNFRSF3/LTBR. Lymphotoxin is produced by lymphocytes and is cytotoxic for a wide range of tumor cells in vitro and in vivo. The chain is Lymphotoxin-alpha (LTA) from Macaca mulatta (Rhesus macaque).